The sequence spans 204 residues: Large ribosomal subunit protein bL25 (204 aa).

Position 123 is a phosphoserine (Ser-123).

Belongs to the bacterial ribosomal protein bL25 family. CTC subfamily. Part of the 50S ribosomal subunit; part of the 5S rRNA/L5/L18/L25 subcomplex. Contacts the 5S rRNA. Binds to the 5S rRNA independently of L5 and L18.

Its function is as follows. This is one of the proteins that binds to the 5S RNA in the ribosome where it forms part of the central protuberance. This Pseudomonas aeruginosa (strain UCBPP-PA14) protein is Large ribosomal subunit protein bL25.